The chain runs to 130 residues: Phosphoribosyl-AMP cyclohydrolase (130 aa).

Position 77 (D77) interacts with Mg(2+). C78 contacts Zn(2+). D79 and D81 together coordinate Mg(2+). Zn(2+)-binding residues include C95 and C102.

Belongs to the PRA-CH family. Homodimer. Mg(2+) serves as cofactor. Zn(2+) is required as a cofactor.

It is found in the cytoplasm. It carries out the reaction 1-(5-phospho-beta-D-ribosyl)-5'-AMP + H2O = 1-(5-phospho-beta-D-ribosyl)-5-[(5-phospho-beta-D-ribosylamino)methylideneamino]imidazole-4-carboxamide. It functions in the pathway amino-acid biosynthesis; L-histidine biosynthesis; L-histidine from 5-phospho-alpha-D-ribose 1-diphosphate: step 3/9. Its function is as follows. Catalyzes the hydrolysis of the adenine ring of phosphoribosyl-AMP. The chain is Phosphoribosyl-AMP cyclohydrolase from Pseudomonas savastanoi pv. phaseolicola (strain 1448A / Race 6) (Pseudomonas syringae pv. phaseolicola (strain 1448A / Race 6)).